The sequence spans 316 residues: Transaldolase (316 aa).

Lysine 126 acts as the Schiff-base intermediate with substrate in catalysis.

Belongs to the transaldolase family. Type 1 subfamily. Homodimer.

The protein resides in the cytoplasm. It catalyses the reaction D-sedoheptulose 7-phosphate + D-glyceraldehyde 3-phosphate = D-erythrose 4-phosphate + beta-D-fructose 6-phosphate. Its pathway is carbohydrate degradation; pentose phosphate pathway; D-glyceraldehyde 3-phosphate and beta-D-fructose 6-phosphate from D-ribose 5-phosphate and D-xylulose 5-phosphate (non-oxidative stage): step 2/3. Transaldolase is important for the balance of metabolites in the pentose-phosphate pathway. The polypeptide is Transaldolase (Methylibium petroleiphilum (strain ATCC BAA-1232 / LMG 22953 / PM1)).